The chain runs to 399 residues: Probable F-box protein At4g22060 (399 aa).

One can recognise an F-box domain in the interval 12 to 48 (SWSKLPLDLLIMVFERLGFVDFQRTKSVCLAWLYASR).

The polypeptide is Probable F-box protein At4g22060 (Arabidopsis thaliana (Mouse-ear cress)).